The primary structure comprises 302 residues: MADSSNSSLNCTAIHDQTVLILGQVFNSVWLFISVIFLYIFACKLCFRPRIYLWLSFYTLGFMLWVLCKVLQEYVTGKFKCVITNCIGDFCLVFLSCIMLGIMLDRYLKIQGTLRGGMKDIHIGIFVSASCFGSLMIALLDGLHMGDSEKLQFNGTESFKCLPATSVSSYKAQLMFKSIFCIICIIMCLILTCLTAKKVLGTRLRKKYVIVGNVGLLSFVNILLWVMIACGLLKQALESNLSLCPTKQSTYIYPYTMPVTVIFVLVIYLFSSTHMKNAMRKSGQIRHSLSSPNQVQSSFRLV.

The Extracellular segment spans residues 1–20 (MADSSNSSLNCTAIHDQTVL). The chain crosses the membrane as a helical span at residues 21 to 41 (ILGQVFNSVWLFISVIFLYIF). At 42-50 (ACKLCFRPR) the chain is on the cytoplasmic side. Residues 51–71 (IYLWLSFYTLGFMLWVLCKVL) traverse the membrane as a helical segment. At 72 to 81 (QEYVTGKFKC) the chain is on the extracellular side. A helical membrane pass occupies residues 82–102 (VITNCIGDFCLVFLSCIMLGI). The Cytoplasmic segment spans residues 103–122 (MLDRYLKIQGTLRGGMKDIH). The helical transmembrane segment at 123-143 (IGIFVSASCFGSLMIALLDGL) threads the bilayer. Over 144 to 173 (HMGDSEKLQFNGTESFKCLPATSVSSYKAQ) the chain is Extracellular. A helical transmembrane segment spans residues 174 to 194 (LMFKSIFCIICIIMCLILTCL). The Cytoplasmic segment spans residues 195–208 (TAKKVLGTRLRKKY). A helical membrane pass occupies residues 209–229 (VIVGNVGLLSFVNILLWVMIA). Residues 230-249 (CGLLKQALESNLSLCPTKQS) are Extracellular-facing. The helical transmembrane segment at 250 to 270 (TYIYPYTMPVTVIFVLVIYLF) threads the bilayer. The Cytoplasmic segment spans residues 271–302 (SSTHMKNAMRKSGQIRHSLSSPNQVQSSFRLV).

Belongs to the G-protein coupled receptor 1 family.

It is found in the host cell membrane. The protein resides in the host endoplasmic reticulum membrane. Functionally, acts as a viral G-protein coupled receptor that constitutively activates host alphai-type G-proteins, thereby inhibiting host forskolin-triggered CREB activation. This is G-protein coupled receptor A5 (A5) from Connochaetes taurinus (Blue wildebeest).